Here is a 106-residue protein sequence, read N- to C-terminus: uncharacterized protein (106 aa).

The protein belongs to the HesB/IscA family.

This is an uncharacterized protein from Bradyrhizobium diazoefficiens (strain JCM 10833 / BCRC 13528 / IAM 13628 / NBRC 14792 / USDA 110).